Consider the following 1694-residue polypeptide: Immunoglobulin A1 protease autotransporter (1694 aa).

The signal sequence occupies residues Met1–Ala25. A Peptidase S6 domain is found at Ala26–Thr332. Ser288 is an active-site residue. The tract at residues Val991–Arg1403 is disordered. Residues Thr997–Glu1021 show a composition bias toward polar residues. Over residues Thr1037 to Glu1047 the composition is skewed to low complexity. The segment covering Ser1049–Gln1061 has biased composition (basic and acidic residues). Positions Lys1082 to Ser1095 are enriched in polar residues. Basic and acidic residues-rich tracts occupy residues Glu1104–Ile1124 and Ala1142–Glu1154. 2 stretches are compositionally biased toward polar residues: residues Thr1155–Ser1178 and Val1199–Gln1210. Over residues Pro1211 to Gln1226 the composition is skewed to basic and acidic residues. Composition is skewed to polar residues over residues Glu1227–Pro1247, Asn1255–Thr1297, and Thr1308–Ser1336. A compositionally biased stretch (low complexity) spans Glu1352 to Asp1370. A compositionally biased stretch (basic residues) spans Arg1374–Ser1384. An Autotransporter domain is found at Asn1442–Phe1694.

The protein localises to the periplasm. It is found in the secreted. The protein resides in the cell surface. Its subcellular location is the cell outer membrane. The enzyme catalyses Cleavage of immunoglobulin A molecules at certain Pro-|-Xaa bonds in the hinge region. No small molecule substrates are known.. Functionally, virulence factor; cleaves host immunoglobulin A producing intact Fc and Fab fragments. In Haemophilus influenzae (strain ATCC 51907 / DSM 11121 / KW20 / Rd), this protein is Immunoglobulin A1 protease autotransporter (iga).